A 285-amino-acid polypeptide reads, in one-letter code: Large ribosomal subunit protein uL2 (285 aa).

Residues 215–285 (GRSRHKGIRP…IIRNRKGEQY (71 aa)) form a disordered region. Basic residues predominate over residues 256–272 (WGKRHMGVKTRNMKKHS).

This sequence belongs to the universal ribosomal protein uL2 family. Part of the 50S ribosomal subunit. Forms a bridge to the 30S subunit in the 70S ribosome.

Functionally, one of the primary rRNA binding proteins. Required for association of the 30S and 50S subunits to form the 70S ribosome, for tRNA binding and peptide bond formation. It has been suggested to have peptidyltransferase activity; this is somewhat controversial. Makes several contacts with the 16S rRNA in the 70S ribosome. In Mycoplasma genitalium (strain ATCC 33530 / DSM 19775 / NCTC 10195 / G37) (Mycoplasmoides genitalium), this protein is Large ribosomal subunit protein uL2.